Consider the following 228-residue polypeptide: Large ribosomal subunit protein uL3 (228 aa).

The segment at 157 to 176 is disordered; the sequence is CHRHAGGTGMSASPSRTFKG.

The protein belongs to the universal ribosomal protein uL3 family. Part of the 50S ribosomal subunit. Forms a cluster with proteins L14 and L19.

Functionally, one of the primary rRNA binding proteins, it binds directly near the 3'-end of the 23S rRNA, where it nucleates assembly of the 50S subunit. This chain is Large ribosomal subunit protein uL3, found in Rhodopirellula baltica (strain DSM 10527 / NCIMB 13988 / SH1).